The chain runs to 434 residues: Glutamate-1-semialdehyde 2,1-aminomutase 1 (434 aa).

Residue Lys-268 is modified to N6-(pyridoxal phosphate)lysine.

The protein belongs to the class-III pyridoxal-phosphate-dependent aminotransferase family. HemL subfamily. In terms of assembly, homodimer. Requires pyridoxal 5'-phosphate as cofactor.

It localises to the cytoplasm. The catalysed reaction is (S)-4-amino-5-oxopentanoate = 5-aminolevulinate. Its pathway is porphyrin-containing compound metabolism; protoporphyrin-IX biosynthesis; 5-aminolevulinate from L-glutamyl-tRNA(Glu): step 2/2. This Shouchella clausii (strain KSM-K16) (Alkalihalobacillus clausii) protein is Glutamate-1-semialdehyde 2,1-aminomutase 1.